The following is a 179-amino-acid chain: DELTA-actitoxin-Afr1a (179 aa).

The tract at residues 1-29 is N-terminal alpha-helix that contributes to the pore; sequence SADVAGAVIDGAGLGFDVLKTVLEALGNV. Position 31 (R31) interacts with an N-(acyl)-sphingosylphosphocholine. N-acetyl-D-glucosamine 6-sulfate contacts are provided by Y51 and R53. 13 residues coordinate an N-(acyl)-sphingosylphosphocholine: R53, S54, R79, G85, Y108, Y113, S114, W116, Y133, Y137, Y138, R144, and G168. A trp-rich region, which is important for the binding to lipid membrane region spans residues 105–120; that stretch reads SVPYDYNWYSNWWNVR. Y138 serves as a coordination point for N-acetyl-D-glucosamine 6-sulfate. The Cell attachment site, crucial for protein stability signature appears at 144–146; it reads RGD.

This sequence belongs to the actinoporin family. Sea anemone subfamily. As to quaternary structure, octamer or nonamer in membranes. Monomer in the soluble state.

The protein localises to the secreted. It is found in the nematocyst. It localises to the target cell membrane. Pore-forming toxin (PFT) that consists of a crown-shaped octamer or nonamer that forms cation-selective hydrophilic pores of about 1.5 nm (inside) and 13 nm (outside). It causes cardiac stimulation and cytolysis (EC(50)=1.6 nM on erythrocytes). Interestingly, the Phe-16 is crucial for hemolysis. Pore formation is a multi-step process that involves specific recognition of membrane sphingomyelin (but neither cholesterol nor phosphatidylcholine) using aromatic rich region and adjacent phosphocholine (POC) binding site, firm binding to the membrane (mainly driven by hydrophobic interactions) accompanied by the transfer of the N-terminal region to the lipid-water interface and finally pore formation after oligomerization of monomers. It is probable that a dimeric form is an assembly intermediate before the complete oligomerization. The formation of stable pores occurs only in vesicles composed of DOPC/SM (there is no oligomerization when the PFT is treated with vesicles of DOPC or SM alone). The transmembrane pore displays 8 lateral perforations, one at each subunit-subunit interface, partially occupied by the acyl-chain region of a bridging lipid. Each pore contains 24 lipid molecules, firmly bound to each subunit, that is, 3 lipids (L1, L2, L3, L4 and/or L5) are associated to each subunit. Lipid L1 bridges 2 subunits, whereas lipids L2 and L3 bind to sites at single subunit. The polypeptide is DELTA-actitoxin-Afr1a (Actinia fragacea (Strawberry anemone)).